The chain runs to 962 residues: Leucine-rich repeat-containing G-protein coupled receptor 6 (962 aa).

The first 16 residues, methionine 1–serine 16, serve as a signal peptide directing secretion. The LRRNT domain maps to proline 20–proline 60. LRR repeat units lie at residues aspartate 38 to leucine 58, serine 59 to asparagine 82, leucine 83 to glycine 106, leucine 107 to leucine 131, asparagine 133 to glycine 154, methionine 155 to aspartate 178, leucine 179 to asparagine 202, leucine 203 to glycine 226, histidine 228 to leucine 250, alanine 251 to glycine 273, proline 275 to phenylalanine 297, leucine 298 to threonine 321, threonine 322 to leucine 344, leucine 345 to threonine 368, leucine 370 to glutamine 390, leucine 391 to serine 414, and glutamine 416 to serine 438. N-linked (GlcNAc...) asparagine glycosylation occurs at asparagine 71. Asparagine 202 carries an N-linked (GlcNAc...) asparagine glycan. A run of 7 helical transmembrane segments spans residues glycine 559–phenylalanine 579, phenylalanine 590–alanine 610, serine 647–glycine 669, alanine 679–valine 699, phenylalanine 723–isoleucine 743, valine 766–serine 786, and serine 801–phenylalanine 821. A disulfide bridge links cysteine 633 with cysteine 708.

This sequence belongs to the G-protein coupled receptor 1 family.

Its subcellular location is the cell membrane. Its function is as follows. Receptor for R-spondins that potentiates the canonical Wnt signaling pathway. Upon binding to R-spondins (rspo1, rspo2, rspo3 or rspo4), associates with phosphorylated lrp6 and frizzled receptors that are activated by extracellular Wnt receptors, triggering the canonical Wnt signaling pathway to increase expression of target genes. In contrast to classical G-protein coupled receptors, does not activate heterotrimeric G-proteins to transduce the signal. This chain is Leucine-rich repeat-containing G-protein coupled receptor 6 (lgr6), found in Danio rerio (Zebrafish).